The sequence spans 235 residues: MGDAATDAGMDAVQKRLMFEDKCILVDENDNVVGHDTKYNCHLMEKIESENLLHRAFSVFLFNSKYELLLQQRSATKVTFPLVWTNTCCSHPLYRESELIKENALGARNAAQRKLLDELGIPAEDVPVDQFIPLGRILYKAPSDGKWGEHELDYLLFIVRDVNVNPNPDEVADIKYVTRDQLKELLRKADAGEEGLKLSPWFRLVVDNFLFKWWDHVEKGTMHEAADMKSIHKLI.

K38 contacts substrate. Mg(2+)-binding residues include H42 and H54. One can recognise a Nudix hydrolase domain in the interval 52 to 204; sequence LLHRAFSVFL…GLKLSPWFRL (153 aa). 2 residues coordinate substrate: R73 and K77. C89 is a catalytic residue. S90 serves as a coordination point for substrate. Residues E149 and E151 each contribute to the Mg(2+) site. E151 is an active-site residue.

This sequence belongs to the IPP isomerase type 1 family. Mg(2+) is required as a cofactor.

It carries out the reaction isopentenyl diphosphate = dimethylallyl diphosphate. The protein operates within isoprenoid biosynthesis; dimethylallyl diphosphate biosynthesis; dimethylallyl diphosphate from isopentenyl diphosphate: step 1/1. It functions in the pathway porphyrin-containing compound metabolism; chlorophyll biosynthesis. Its function is as follows. Catalyzes the 1,3-allylic rearrangement of the homoallylic substrate isopentenyl (IPP) to its highly electrophilic allylic isomer, dimethylallyl diphosphate (DMAPP). This chain is Isopentenyl-diphosphate Delta-isomerase I (IPI1), found in Camptotheca acuminata (Happy tree).